Reading from the N-terminus, the 525-residue chain is MARKALKLASWTSVALAASGVYLYSNNYLDPNDFGAVRVGRAVATTAVISYDYLTSLRSVPYGSEEYLQRRSQVHLRSARRLFELCCANRGTFIKVGQHLGALDYLLPEEYTSTLKVLHSQAPQSSMQEVRQVIREDLGKEIHDLFLSFDDTPLGAASLAQVHKAVLHDGRTVAVKVQHPKVQAQSSKDILLMEVLVLAVKQLFPDFEFMWLVDEAKKNLPLELDFLNEGRNAEKVAHMLRHFDFLKVPQIHWELSTKRVLLMEFVEGGQVNDRAYMEKNQIDVNEISCHLGKMYSEMIFVNGFVHCDPHPGNVLVRKRPDTGKAEIVLLDHGLYQVLTEEFRLDYCHLWQSLIWTDMDGLKQYSQRLGAADLYPLFACMLTARSWDSVKQGIGQAPVSATEDSEIRNNAACYLPEISQLLNHVPRQMLLILKTNDLLRSIETTLGTRSSASSFLNMSRCCIRALAEHKKRDAGSFFRRTQISFSEAFSLWQINLHELLLRVRALRLACWVSALLGWLTRAPHRM.

The region spanning 148–477 (SFDDTPLGAA…HKKRDAGSFF (330 aa)) is the Protein kinase domain. ATP-binding positions include 154-162 (LGAASLAQV) and Lys176. Asp308 serves as the catalytic Proton acceptor.

The protein belongs to the protein kinase superfamily. ADCK protein kinase family.

The protein localises to the mitochondrion. Functionally, appears to be essential for maintaining mitochondrial cristae formation and mitochondrial function by acting via YME1L1 in a kinase-independent manner to regulate essential mitochondrial structural proteins OPA1 and IMMT. The action of this enzyme is not yet clear. It is not known if it has protein kinase activity and what type of substrate it would phosphorylate (Ser, Thr or Tyr). The sequence is that of AarF domain-containing protein kinase 1 (Adck1) from Mus musculus (Mouse).